A 141-amino-acid chain; its full sequence is Ribonuclease P protein component (141 aa).

Disordered stretches follow at residues 37–56 (RTEE…VGFT) and 114–141 (RRIT…VNGK). Over residues 114 to 124 (RRITAKGERRS) the composition is skewed to basic and acidic residues.

It belongs to the RnpA family. As to quaternary structure, consists of a catalytic RNA component (M1 or rnpB) and a protein subunit.

The enzyme catalyses Endonucleolytic cleavage of RNA, removing 5'-extranucleotides from tRNA precursor.. RNaseP catalyzes the removal of the 5'-leader sequence from pre-tRNA to produce the mature 5'-terminus. It can also cleave other RNA substrates such as 4.5S RNA. The protein component plays an auxiliary but essential role in vivo by binding to the 5'-leader sequence and broadening the substrate specificity of the ribozyme. This is Ribonuclease P protein component from Brucella melitensis biotype 1 (strain ATCC 23456 / CCUG 17765 / NCTC 10094 / 16M).